We begin with the raw amino-acid sequence, 336 residues long: TBC1 domain family member 21 (336 aa).

One can recognise a Rab-GAP TBC domain in the interval 57-265 (GLHPFVRTEA…RLWEVLLTGK (209 aa)).

Interacts with ACTB. Interacts with ARMC12, TOMM20, DNAH7 and RAP1A. Interacts with RAB10. Expressed in round and elongated spermatids (at protein level). Expressed specifically in adult testis and very weakly in fetal brain.

It localises to the cytoplasmic vesicle. It is found in the secretory vesicle. The protein localises to the acrosome. The protein resides in the cytoplasm. Its subcellular location is the cytoskeleton. In terms of biological role, acts as a GTPase-activating protein for Rab family protein(s). Essential for the establishment of male fertility, and is required for both the production of normal sperm number and sperm function. Plays an important role in the formation of intact mitochondria, outer dense fibers and axoneme within the sperm tail. Essential for sperm mitochondrial sheath formation and for the interactions of ARMC12 with VDAC2 and VDAC3. May be involved in acrosome formation and cytoskeletal reorganization during spermiogenesis, possibly by regulating RAB3A activity. This chain is TBC1 domain family member 21 (TBC1D21), found in Homo sapiens (Human).